An 82-amino-acid chain; its full sequence is MAMRLAAAAAFVRRLVPARNPVISAEAEAVTCGRGDKKTKRGKRFKGSYGNARPKREKKIERIKDRVEVPRSTPWPLPFKLI.

Residues 1–22 constitute a mitochondrion transit peptide; sequence MAMRLAAAAAFVRRLVPARNPV. A disordered region spans residues 34–56; the sequence is RGDKKTKRGKRFKGSYGNARPKR. The span at 37-46 shows a compositional bias: basic residues; sequence KKTKRGKRFK.

It belongs to the bacterial ribosomal protein bTHX family.

It localises to the mitochondrion. This Oryza sativa subsp. japonica (Rice) protein is Small ribosomal subunit protein bTHXm.